A 238-amino-acid chain; its full sequence is CBS domain-containing protein CBSX2, chloroplastic (238 aa).

The transit peptide at 1–71 (MGSISLSNSM…ASVNNNNSVP (71 aa)) directs the protein to the chloroplast. CBS domains follow at residues 83-145 (MTPR…QNDT) and 177-234 (MTPS…KRET).

Its subcellular location is the plastid. The protein localises to the chloroplast stroma. This Arabidopsis thaliana (Mouse-ear cress) protein is CBS domain-containing protein CBSX2, chloroplastic (CBSX2).